The primary structure comprises 342 residues: Anthranilate phosphoribosyltransferase (342 aa).

5-phospho-alpha-D-ribose 1-diphosphate is bound by residues glycine 84, 87-88 (GD), threonine 92, 94-97 (NITT), 112-120 (KHGNRSVSS), and serine 124. Glycine 84 contacts anthranilate. Threonine 96 contributes to the Mg(2+) binding site. An anthranilate-binding site is contributed by asparagine 115. Arginine 170 is a binding site for anthranilate. Aspartate 228 and glutamate 229 together coordinate Mg(2+).

The protein belongs to the anthranilate phosphoribosyltransferase family. As to quaternary structure, homodimer. Mg(2+) serves as cofactor.

It catalyses the reaction N-(5-phospho-beta-D-ribosyl)anthranilate + diphosphate = 5-phospho-alpha-D-ribose 1-diphosphate + anthranilate. Its pathway is amino-acid biosynthesis; L-tryptophan biosynthesis; L-tryptophan from chorismate: step 2/5. In terms of biological role, catalyzes the transfer of the phosphoribosyl group of 5-phosphorylribose-1-pyrophosphate (PRPP) to anthranilate to yield N-(5'-phosphoribosyl)-anthranilate (PRA). The protein is Anthranilate phosphoribosyltransferase of Corynebacterium efficiens (strain DSM 44549 / YS-314 / AJ 12310 / JCM 11189 / NBRC 100395).